The chain runs to 164 residues: Phosphohistidine phosphatase SixA homolog (164 aa).

The protein belongs to the SixA phosphatase family.

The protein is Phosphohistidine phosphatase SixA homolog (sixA-A) of Haemophilus influenzae (strain ATCC 51907 / DSM 11121 / KW20 / Rd).